The primary structure comprises 163 residues: Ribonuclease P protein component 4 (163 aa).

Zn(2+) is bound by residues Cys-66, Cys-69, Cys-96, and Cys-99. A disordered region spans residues 110 to 163 (GPRGGAPISPPAAEYGSGGRDSGEREDKGPQGPPRQGGRDNRQGGGHQGGPKGD). Positions 152 to 163 (QGGGHQGGPKGD) are enriched in gly residues.

The protein belongs to the eukaryotic/archaeal RNase P protein component 4 family. In terms of assembly, consists of a catalytic RNA component and at least 4-5 protein subunits. Zn(2+) is required as a cofactor.

The protein resides in the cytoplasm. It catalyses the reaction Endonucleolytic cleavage of RNA, removing 5'-extranucleotides from tRNA precursor.. Its function is as follows. Part of ribonuclease P, a protein complex that generates mature tRNA molecules by cleaving their 5'-ends. The polypeptide is Ribonuclease P protein component 4 (Aeropyrum pernix (strain ATCC 700893 / DSM 11879 / JCM 9820 / NBRC 100138 / K1)).